The chain runs to 589 residues: Probable translation initiation factor IF-2 (589 aa).

Positions Leu14–Glu231 constitute a tr-type G domain. Residues Gly23–Thr30 form a G1 region. GTP is bound at residue Gly23–Thr30. The segment at Gly48–Arg52 is G2. Positions Asp84–Gly87 are G3. Residues Asp84 to His88 and Asn138 to Asp141 each bind GTP. Positions Asn138–Asp141 are G4. Positions Ser206–Lys208 are G5.

The protein belongs to the TRAFAC class translation factor GTPase superfamily. Classic translation factor GTPase family. IF-2 subfamily.

Functionally, function in general translation initiation by promoting the binding of the formylmethionine-tRNA to ribosomes. Seems to function along with eIF-2. This is Probable translation initiation factor IF-2 from Thermoplasma volcanium (strain ATCC 51530 / DSM 4299 / JCM 9571 / NBRC 15438 / GSS1).